We begin with the raw amino-acid sequence, 397 residues long: Growth-regulating factor 1 (397 aa).

The QLQ domain maps to 18–53 (PFTASQWQELEHQALIYKYMASGTPIPSDLILPLRR). 2 short sequence motifs (bipartite nuclear localization signal) span residues 86–105 (RKAEDPEPGRCRRTDGKKWR) and 123–130 (RGKNRSRK). In terms of domain architecture, WRC spans 90–134 (DPEPGRCRRTDGKKWRCSKEAYPDSKYCEKHMHRGKNRSRKPVEM). The segment at 117–176 (CEKHMHRGKNRSRKPVEMSLATPPPPSSSATSAASNTSAGVAPTTTTTSSPAPSYSRPAP) is disordered. Residues 120–129 (HMHRGKNRSR) are compositionally biased toward basic residues. A compositionally biased stretch (low complexity) spans 144-174 (SSATSAASNTSAGVAPTTTTTSSPAPSYSRP).

Belongs to the GRF family.

It localises to the nucleus. Functionally, transcription activator that plays a regulatory role in gibberellin-induced stem elongation. The chain is Growth-regulating factor 1 (GRF1) from Oryza sativa subsp. japonica (Rice).